The sequence spans 1180 residues: RecBCD enzyme subunit RecB (1180 aa).

The interval 1–852 is DNA-binding and helicase activity, interacts with RecC; it reads MITTIPKSIN…QSGKNHISTK (852 aa). Residues 3–448 enclose the UvrD-like helicase ATP-binding domain; that stretch reads TTIPKSINVT…YFLDTNWRSS (446 aa). 24-31 contributes to the ATP binding site; that stretch reads ASAGTGKT. Positions 478 to 745 constitute a UvrD-like helicase C-terminal domain; that stretch reads SSRINKTTKF…KIVSIHKSKG (268 aa). Residues 905–1180 form a nuclease activity, interacts with RecD and RecA region; it reads NYNFTSYSQL…EIIKKLEQIF (276 aa). Residues His-964, Asp-1075, and Asp-1088 each coordinate Mg(2+). Asp-1088 functions as the For nuclease activity in the catalytic mechanism.

This sequence belongs to the helicase family. UvrD subfamily. As to quaternary structure, heterotrimer of RecB, RecC and RecD. All subunits contribute to DNA-binding. Interacts with RecA. Requires Mg(2+) as cofactor.

It carries out the reaction Exonucleolytic cleavage (in the presence of ATP) in either 5'- to 3'- or 3'- to 5'-direction to yield 5'-phosphooligonucleotides.. The enzyme catalyses Couples ATP hydrolysis with the unwinding of duplex DNA by translocating in the 3'-5' direction.. The catalysed reaction is ATP + H2O = ADP + phosphate + H(+). Its function is as follows. A helicase/nuclease that prepares dsDNA breaks (DSB) for recombinational DNA repair. Binds to DSBs and unwinds DNA via a highly rapid and processive ATP-dependent bidirectional helicase activity. Unwinds dsDNA until it encounters a Chi (crossover hotspot instigator) sequence from the 3' direction. Cuts ssDNA a few nucleotides 3' to the Chi site. The properties and activities of the enzyme are changed at Chi. The Chi-altered holoenzyme produces a long 3'-ssDNA overhang and facilitates RecA-binding to the ssDNA for homologous DNA recombination and repair. Holoenzyme degrades any linearized DNA that is unable to undergo homologous recombination. In the holoenzyme this subunit contributes ATPase, 3'-5' helicase, exonuclease activity and loads RecA onto ssDNA. In Buchnera aphidicola subsp. Baizongia pistaciae (strain Bp), this protein is RecBCD enzyme subunit RecB.